The following is a 153-amino-acid chain: Small ribosomal subunit protein uS13 (153 aa).

The tract at residues 134–153 (GQRTKSNGRRGRSMGVSRKK) is disordered.

This sequence belongs to the universal ribosomal protein uS13 family.

It is found in the cytoplasm. Functionally, located at the top of the head of the 40S subunit, it contacts several helices of the 18S rRNA. This is Small ribosomal subunit protein uS13 (RPS18) from Encephalitozoon cuniculi (strain GB-M1) (Microsporidian parasite).